The following is a 258-amino-acid chain: PF03932 family protein CutC (258 aa).

Belongs to the CutC family.

It localises to the cytoplasm. In Mesorhizobium japonicum (strain LMG 29417 / CECT 9101 / MAFF 303099) (Mesorhizobium loti (strain MAFF 303099)), this protein is PF03932 family protein CutC.